The following is a 391-amino-acid chain: 1-deoxy-D-xylulose 5-phosphate reductoisomerase (391 aa).

NADPH is bound at residue Asn109. Lys110 is a 1-deoxy-D-xylulose 5-phosphate binding site. NADPH is bound at residue Glu111. Mn(2+) is bound at residue Asp135. 1-deoxy-D-xylulose 5-phosphate-binding residues include Ser136, Glu137, Ser171, and His194. Glu137 lines the Mn(2+) pocket. Gly200 lines the NADPH pocket. Residues Ser207, Asn212, Arg213, and Glu216 each contribute to the 1-deoxy-D-xylulose 5-phosphate site. A Mn(2+)-binding site is contributed by Glu216.

It belongs to the DXR family. In terms of assembly, homodimer. Mg(2+) serves as cofactor. Mn(2+) is required as a cofactor.

It catalyses the reaction 2-C-methyl-D-erythritol 4-phosphate + NADP(+) = 1-deoxy-D-xylulose 5-phosphate + NADPH + H(+). It participates in isoprenoid biosynthesis; isopentenyl diphosphate biosynthesis via DXP pathway; isopentenyl diphosphate from 1-deoxy-D-xylulose 5-phosphate: step 1/6. Its function is as follows. Catalyzes the NADPH-dependent rearrangement and reduction of 1-deoxy-D-xylulose-5-phosphate (DXP) to 2-C-methyl-D-erythritol 4-phosphate (MEP). The polypeptide is 1-deoxy-D-xylulose 5-phosphate reductoisomerase (Blochmanniella floridana).